A 68-amino-acid chain; its full sequence is Large ribosomal subunit protein uL29 (68 aa).

Belongs to the universal ribosomal protein uL29 family.

The sequence is that of Large ribosomal subunit protein uL29 from Finegoldia magna (strain ATCC 29328 / DSM 20472 / WAL 2508) (Peptostreptococcus magnus).